A 427-amino-acid chain; its full sequence is Adenylosuccinate synthetase (427 aa).

Residues 12–18 (GDEGKGK) and 40–42 (GHT) contribute to the GTP site. Residue D13 is the Proton acceptor of the active site. Mg(2+)-binding residues include D13 and G40. Residues 13 to 16 (DEGK), 38 to 41 (NAGH), T130, R144, Q224, T239, and R303 each bind IMP. H41 acts as the Proton donor in catalysis. 299-305 (VTTGRAR) contacts substrate. GTP-binding positions include R305, 331–333 (KID), and 413–415 (SVG).

This sequence belongs to the adenylosuccinate synthetase family. As to quaternary structure, homodimer. Requires Mg(2+) as cofactor.

The protein resides in the cytoplasm. It carries out the reaction IMP + L-aspartate + GTP = N(6)-(1,2-dicarboxyethyl)-AMP + GDP + phosphate + 2 H(+). The protein operates within purine metabolism; AMP biosynthesis via de novo pathway; AMP from IMP: step 1/2. Functionally, plays an important role in the de novo pathway of purine nucleotide biosynthesis. Catalyzes the first committed step in the biosynthesis of AMP from IMP. The protein is Adenylosuccinate synthetase of Clostridium novyi (strain NT).